The following is a 913-amino-acid chain: Auxilin (913 aa).

Residue M1 is modified to N-acetylmethionine. Tandem repeats lie at residues 36–39 (NLKD), 40–43 (NLKD), and 44–47 (TLKD). Residues 36–47 (NLKDNLKDTLKD) form a 3 X 4 AA approximate tandem repeats region. Positions 55–222 (SVTSYTKGDL…GYMCDLLADK (168 aa)) constitute a Phosphatase tensin-type domain. At S112 the chain carries Phosphoserine. The Phosphocysteine intermediate role is filled by C164. The C2 tensin-type domain occupies 228–366 (FKPLTIKSIT…FQVTLDVELQ (139 aa)). Residues 409–417 (PIDIPPDNP) carry the SH3-binding motif. Residues 451–776 (QESEQSDDEL…GKGSSNLEGK (326 aa)) form a disordered region. A phosphoserine mark is found at S453 and S456. Positions 506–523 (AMSNSFSPPAAPPTNSEL) are enriched in polar residues. Over residues 554-572 (ASTQSTPRRSATSTSASPT) the composition is skewed to low complexity. S563 and S570 each carry phosphoserine. The segment covering 599-629 (FLNTSSASSDPFLQPTRSPSPTVHASSTPAV) has biased composition (polar residues). Over residues 654–669 (SAATSPTGSSHGTPTH) the composition is skewed to low complexity. The J domain maps to 849–913 (TKWKPVGMAD…FENQGQKPLY (65 aa)).

Forms a complex composed of HSPA8, CLTC and DNAJC6. Interacts with HSPA8/HSC70 in an ATP-dependent manner; this interaction stimulates the HSPA8's ATPase activity. Interacts with CLTC; this interaction produces a local change in heavy-chain contacts, creating a detectable global distortion of the clathrin coat. Interacts with AP2A2. Interacts with DNM1(GTP-bound form); this interaction allows clathrin-coated vesicle (CCV) formation at the plasma membrane. Phosphorylation at Ser-570 modulates its ability to bind CLTC and therefore the synaptic vesicle endocytosis (SVE). In terms of processing, the N-terminus is blocked. Expressed in various brain regions, including cerebellum, corpus callosum, cortex, striatum, brainstem, pons, putamen, spinal cord and substantia nigra. Very low expression in non-neural tissues such as leukocytes, liver, adipose tissue, skeletal muscle and bone marrow.

The protein resides in the cytoplasmic vesicle. The protein localises to the clathrin-coated vesicle. May act as a protein phosphatase and/or a lipid phosphatase. Co-chaperone that recruits HSPA8/HSC70 to clathrin-coated vesicles (CCVs) and promotes the ATP-dependent dissociation of clathrin from CCVs and participates in clathrin-mediated endocytosis of synaptic vesicles and their recycling and also in intracellular trafficking. Firstly, binds tightly to the clathrin cages, at a ratio of one DNAJC6 per clathrin triskelion. The HSPA8:ATP complex then binds to the clathrin-auxilin cage, initially at a ratio of one HSPA8 per triskelion leading to ATP hydrolysis stimulation and causing a conformational change in the HSPA8. This cycle is repeated three times to drive to a complex containing the clathrin-auxilin cage associated to three HSPA8:ADP complex. The ATP hydrolysis of the third HSPA8:ATP complex leads to a concerted dismantling of the cage into component triskelia. Then, dissociates from the released triskelia and be recycled to initiate another cycle of HSPA8's recruitment. Also acts during the early steps of clathrin-coated vesicle (CCV) formation through its interaction with the GTP bound form of DNM1. The chain is Auxilin from Homo sapiens (Human).